The sequence spans 245 residues: Probable phosphatase YpAngola_A2446 (245 aa).

Zn(2+) is bound by residues histidine 7, histidine 9, histidine 15, histidine 40, glutamate 73, histidine 101, histidine 131, aspartate 192, and histidine 194.

It belongs to the PHP family. In terms of assembly, homotrimer. Requires Zn(2+) as cofactor.

This chain is Probable phosphatase YpAngola_A2446, found in Yersinia pestis bv. Antiqua (strain Angola).